The primary structure comprises 111 residues: Putative ciliary rootlet coiled-coil protein-like 1 protein (111 aa).

Residues 21–86 adopt a coiled-coil conformation; sequence MELELSVTKL…RQAEQEATVA (66 aa).

This sequence belongs to the rootletin family.

The sequence is that of Putative ciliary rootlet coiled-coil protein-like 1 protein (CROCCP2) from Homo sapiens (Human).